The sequence spans 202 residues: Imidazoleglycerol-phosphate dehydratase (202 aa).

This sequence belongs to the imidazoleglycerol-phosphate dehydratase family.

It is found in the cytoplasm. The catalysed reaction is D-erythro-1-(imidazol-4-yl)glycerol 3-phosphate = 3-(imidazol-4-yl)-2-oxopropyl phosphate + H2O. It functions in the pathway amino-acid biosynthesis; L-histidine biosynthesis; L-histidine from 5-phospho-alpha-D-ribose 1-diphosphate: step 6/9. The polypeptide is Imidazoleglycerol-phosphate dehydratase (Corynebacterium diphtheriae (strain ATCC 700971 / NCTC 13129 / Biotype gravis)).